The chain runs to 174 residues: Larval cuticle protein LCP-22 (174 aa).

The first 16 residues, 1–16, serve as a signal peptide directing secretion; sequence MKFAVVFACMVAAVAA. The region spanning 82–153 is the Chitin-binding type R&amp;R domain; the sequence is DGSYTYFYET…PTGNAIPTSP (72 aa).

Functionally, component of the cuticle of the larva of Bombyx mori. The polypeptide is Larval cuticle protein LCP-22 (LCP22) (Bombyx mori (Silk moth)).